A 967-amino-acid polypeptide reads, in one-letter code: Sulfite dehydrogenase subunit A (967 aa).

The region spanning 15 to 71 (VEVKETTCYMCACRCGIRVHLRDGEVRYIDGNPNHPLNKGVICAKGSSGIMKQYSPG) is the 4Fe-4S Mo/W bis-MGD-type domain. Residues C22, C25, C29, and C57 each coordinate [4Fe-4S] cluster.

Belongs to the prokaryotic molybdopterin-containing oxidoreductase family. In terms of assembly, forms a heterotrimeric membrane-bound complex composed of a catalytic heterodimer (SoeAB) and a membrane anchor protein (SoeC). The cofactor is [4Fe-4S] cluster. Mo-bis(molybdopterin guanine dinucleotide) is required as a cofactor.

The protein localises to the cell inner membrane. The catalysed reaction is a quinone + sulfite + H2O = a quinol + sulfate. The enzyme catalyses a menaquinone + sulfite + H2O = a menaquinol + sulfate. Functionally, part of the SoeABC complex that catalyzes the oxidation of sulfite to sulfate. The protein is Sulfite dehydrogenase subunit A of Allochromatium vinosum (strain ATCC 17899 / DSM 180 / NBRC 103801 / NCIMB 10441 / D) (Chromatium vinosum).